A 365-amino-acid polypeptide reads, in one-letter code: U-box domain-containing protein 56 (365 aa).

A coiled-coil region spans residues 176-281; the sequence is YEEQRRRLEI…ELLRALEKGE (106 aa). The 73-residue stretch at 293-365 folds into the U-box domain; the sequence is EPPQCFICPI…AIKDWLQQHP (73 aa).

It catalyses the reaction S-ubiquitinyl-[E2 ubiquitin-conjugating enzyme]-L-cysteine + [acceptor protein]-L-lysine = [E2 ubiquitin-conjugating enzyme]-L-cysteine + N(6)-ubiquitinyl-[acceptor protein]-L-lysine.. The protein operates within protein modification; protein ubiquitination. Its function is as follows. Functions as an E3 ubiquitin ligase. This chain is U-box domain-containing protein 56 (PUB56), found in Arabidopsis thaliana (Mouse-ear cress).